We begin with the raw amino-acid sequence, 394 residues long: MSFIKQVGKLIRPNDYSSSIFQTSFLNNVIQVRTATKRAAGSKTNKNDSAGRRLGPKAYEGHFVKPGQIIMRQRGTKIHPGENVDIGKDHTIFAIEPGYVRFYYDPFHPLRKYVGIALRKDLNLPTPHFSPRVRRFGYEKITDPAEAEKEENHMSRKEFLQQPELEKTRQEQQNQEEQRASAFRNALSSQFNLDLSEADFQLALNRLLNISQLTNVGQTLEDAEVQSTYNYVFDLKLSCKRGEMTSEEFSNLKMHYIQFAENFDKKVTIDAQGNPCTYVTPEAKKENQNEILSKLENEFSNRVISEKDKETIFDLIMTPGIYNLSQQSYLKDRFLPSVLPTTVKETVVEDVDPKKPPKGVIVTRIFDEETKQIKVIGRTKEAYIGQTDLDKSLA.

A mitochondrion-targeting transit peptide spans 1-34 (MSFIKQVGKLIRPNDYSSSIFQTSFLNNVIQVRT). Disordered stretches follow at residues 36–57 (TKRAAGSKTNKNDSAGRRLGPK) and 145–181 (AEAEKEENHMSRKEFLQQPELEKTRQEQQNQEEQRAS). A compositionally biased stretch (basic and acidic residues) spans 145 to 170 (AEAEKEENHMSRKEFLQQPELEKTRQ).

Belongs to the bacterial ribosomal protein bL27 family.

The protein localises to the mitochondrion. Its function is as follows. Component of the large subunit of mitochondrial ribosome. This is Large ribosomal subunit protein bL27m (MRPL2) from Debaryomyces hansenii (strain ATCC 36239 / CBS 767 / BCRC 21394 / JCM 1990 / NBRC 0083 / IGC 2968) (Yeast).